Consider the following 331-residue polypeptide: Ribose operon repressor (331 aa).

In terms of domain architecture, HTH lacI-type spans 1 to 56; sequence MTTIRDVAKHAKVSVATVSRVLNKKGYVSKEAEEAVLQAIKELNYQPSSVARSLYH. Residues 4-23 constitute a DNA-binding region (H-T-H motif); that stretch reads IRDVAKHAKVSVATVSRVLN.

Its function is as follows. Transcriptional repressor for the ribose rbsDACBK operon. This Halalkalibacterium halodurans (strain ATCC BAA-125 / DSM 18197 / FERM 7344 / JCM 9153 / C-125) (Bacillus halodurans) protein is Ribose operon repressor (rbsR).